The sequence spans 87 residues: DNA/RNA-binding protein Alba (87 aa).

Lysine 9 is modified (N6-acetyllysine).

It belongs to the histone-like Alba family. Acetylated. Acetylation at Lys-9 decreases DNA-binding affinity.

It is found in the cytoplasm. The protein localises to the chromosome. Functionally, binds double-stranded DNA tightly but without sequence specificity. Involved in DNA compaction. The protein is DNA/RNA-binding protein Alba of Methanocaldococcus jannaschii (strain ATCC 43067 / DSM 2661 / JAL-1 / JCM 10045 / NBRC 100440) (Methanococcus jannaschii).